The sequence spans 447 residues: Ribosomal protein uS12 methylthiotransferase RimO (447 aa).

One can recognise an MTTase N-terminal domain in the interval 4-114; sequence PKVGFVSLGC…VMEAVHEYVP (111 aa). [4Fe-4S] cluster contacts are provided by C13, C49, C78, C147, C151, and C154. The 238-residue stretch at 133–370 folds into the Radical SAM core domain; that stretch reads LTPKHYAYLK…MQVQQQISAA (238 aa). Residues 373–443 enclose the TRAM domain; that stretch reads QKRIGQTMTV…EYDLFAKLIK (71 aa).

This sequence belongs to the methylthiotransferase family. RimO subfamily. [4Fe-4S] cluster serves as cofactor.

The protein localises to the cytoplasm. The enzyme catalyses L-aspartate(89)-[ribosomal protein uS12]-hydrogen + (sulfur carrier)-SH + AH2 + 2 S-adenosyl-L-methionine = 3-methylsulfanyl-L-aspartate(89)-[ribosomal protein uS12]-hydrogen + (sulfur carrier)-H + 5'-deoxyadenosine + L-methionine + A + S-adenosyl-L-homocysteine + 2 H(+). Its function is as follows. Catalyzes the methylthiolation of an aspartic acid residue of ribosomal protein uS12. The polypeptide is Ribosomal protein uS12 methylthiotransferase RimO (Acinetobacter baumannii (strain AB307-0294)).